A 247-amino-acid chain; its full sequence is Eukaryotic translation initiation factor 3 subunit J (247 aa).

2 disordered regions span residues 1–64 (MADW…KTLK) and 77–101 (EEKR…EEQM). Residues 24–45 (EGEDEDDDIKESWDDDDEDEKK) show a composition bias toward acidic residues. Residues 43–108 (EKKEDEAKNT…EQMAEKLRRQ (66 aa)) adopt a coiled-coil conformation.

This sequence belongs to the eIF-3 subunit J family. As to quaternary structure, component of the eukaryotic translation initiation factor 3 (eIF-3) complex.

The protein localises to the cytoplasm. In terms of biological role, component of the eukaryotic translation initiation factor 3 (eIF-3) complex, which is involved in protein synthesis of a specialized repertoire of mRNAs and, together with other initiation factors, stimulates binding of mRNA and methionyl-tRNAi to the 40S ribosome. The eIF-3 complex specifically targets and initiates translation of a subset of mRNAs involved in cell proliferation. The polypeptide is Eukaryotic translation initiation factor 3 subunit J (Nematostella vectensis (Starlet sea anemone)).